The sequence spans 456 residues: MLNNAMSVVILAAGKGTRMYSDLPKVLHTLAGKAMVQHVIDAANELGAAHVHLVYGHGGDLLKQALKDDNLNWVLQAEQLGTGHAMQQAAPFFADDEDILMLYGDVPLISVETLQRLRDAKPQGGIGLLTVKLDDPTGYGRITRENGKVTGIVEHKDATDEQRQIQEINTGILIANGADMKRWLAKLTNNNAQGEYYITDIIALAYQEGREIVAVHPQRLSEVEGVNNRLQLSRLERVYQSEQAEKLLLAGVMLRDPARFDLRGTLTHGRDVEIDTNVIIEGNVTLGHRVKIGTGCVIKNSVIGDDCEISPYTVVEDANLAAACTIGPFARLRPGAELLEGAHVGNFVEMKKARLGKGSKAGHLTYLGDAEIGDNVNIGAGTITCNYDGANKFKTIIGDDVFVGSDTQLVAPVTVGKGATIAAGTTVTRNVGENALAISRVPQTQKEGWRRPVKKK.

The interval 1–229 (MLNNAMSVVI…LSEVEGVNNR (229 aa)) is pyrophosphorylase. UDP-N-acetyl-alpha-D-glucosamine is bound by residues 11–14 (LAAG), Lys-25, Gln-76, 81–82 (GT), 103–105 (YGD), Gly-140, Glu-154, Asn-169, and Asn-227. Asp-105 lines the Mg(2+) pocket. Asn-227 is a binding site for Mg(2+). Residues 230–250 (LQLSRLERVYQSEQAEKLLLA) form a linker region. The N-acetyltransferase stretch occupies residues 251–456 (GVMLRDPARF…EGWRRPVKKK (206 aa)). Residues Arg-333 and Lys-351 each contribute to the UDP-N-acetyl-alpha-D-glucosamine site. His-363 (proton acceptor) is an active-site residue. Residues Tyr-366 and Asn-377 each contribute to the UDP-N-acetyl-alpha-D-glucosamine site. Residues Ala-380, 386–387 (NY), Ser-405, Ala-423, and Arg-440 contribute to the acetyl-CoA site.

The protein in the N-terminal section; belongs to the N-acetylglucosamine-1-phosphate uridyltransferase family. This sequence in the C-terminal section; belongs to the transferase hexapeptide repeat family. Homotrimer. Mg(2+) serves as cofactor.

Its subcellular location is the cytoplasm. The enzyme catalyses alpha-D-glucosamine 1-phosphate + acetyl-CoA = N-acetyl-alpha-D-glucosamine 1-phosphate + CoA + H(+). The catalysed reaction is N-acetyl-alpha-D-glucosamine 1-phosphate + UTP + H(+) = UDP-N-acetyl-alpha-D-glucosamine + diphosphate. The protein operates within nucleotide-sugar biosynthesis; UDP-N-acetyl-alpha-D-glucosamine biosynthesis; N-acetyl-alpha-D-glucosamine 1-phosphate from alpha-D-glucosamine 6-phosphate (route II): step 2/2. It functions in the pathway nucleotide-sugar biosynthesis; UDP-N-acetyl-alpha-D-glucosamine biosynthesis; UDP-N-acetyl-alpha-D-glucosamine from N-acetyl-alpha-D-glucosamine 1-phosphate: step 1/1. Its pathway is bacterial outer membrane biogenesis; LPS lipid A biosynthesis. Catalyzes the last two sequential reactions in the de novo biosynthetic pathway for UDP-N-acetylglucosamine (UDP-GlcNAc). The C-terminal domain catalyzes the transfer of acetyl group from acetyl coenzyme A to glucosamine-1-phosphate (GlcN-1-P) to produce N-acetylglucosamine-1-phosphate (GlcNAc-1-P), which is converted into UDP-GlcNAc by the transfer of uridine 5-monophosphate (from uridine 5-triphosphate), a reaction catalyzed by the N-terminal domain. This chain is Bifunctional protein GlmU, found in Escherichia coli O139:H28 (strain E24377A / ETEC).